A 125-amino-acid chain; its full sequence is UPF0734 protein DDB_G0273871/DDB_G0273177 (125 aa).

This sequence belongs to the UPF0734 family.

This Dictyostelium discoideum (Social amoeba) protein is UPF0734 protein DDB_G0273871/DDB_G0273177.